The sequence spans 260 residues: GTP cyclohydrolase FolE2 (260 aa).

Belongs to the GTP cyclohydrolase IV family.

It catalyses the reaction GTP + H2O = 7,8-dihydroneopterin 3'-triphosphate + formate + H(+). It participates in cofactor biosynthesis; 7,8-dihydroneopterin triphosphate biosynthesis; 7,8-dihydroneopterin triphosphate from GTP: step 1/1. Converts GTP to 7,8-dihydroneopterin triphosphate. The protein is GTP cyclohydrolase FolE2 of Desulfosudis oleivorans (strain DSM 6200 / JCM 39069 / Hxd3) (Desulfococcus oleovorans).